Reading from the N-terminus, the 295-residue chain is uncharacterized protein (295 aa).

This sequence belongs to the ROK (NagC/XylR) family.

This is an uncharacterized protein from Clostridium perfringens (strain 13 / Type A).